We begin with the raw amino-acid sequence, 276 residues long: MILSGHARLAGVIGYPVAHSRSPRLHGTWLERHGIDGAYLPLAIAPDDFAACVAALAKMGFAGANVTIPHKEAAFAVCDRVADSARRAGAVNTLVFTPTGIEGANTDGSGFLANLRAHGVNPAAGPALVLGAGGAARAIATALQDAGAVVTLCNRSPERAVALARDFGLVHIPWEARSAALADHALVVNTTSLGMAGHNPLELDLARAAPGMAVADIVYVPLETPLLAAARARGLVAVEGLGMLLHQAVPGFAAWFGVTPVVDDALYRAVAADLMG.

Shikimate is bound by residues 20–22 (SRS) and Thr67. Lys71 acts as the Proton acceptor in catalysis. Asp83 provides a ligand contact to NADP(+). Residues Asn92 and Asp107 each coordinate shikimate. Residues 131–135 (GAGGA) and Ile217 each bind NADP(+). Tyr219 serves as a coordination point for shikimate. Gly240 lines the NADP(+) pocket.

This sequence belongs to the shikimate dehydrogenase family. Homodimer.

The catalysed reaction is shikimate + NADP(+) = 3-dehydroshikimate + NADPH + H(+). Its pathway is metabolic intermediate biosynthesis; chorismate biosynthesis; chorismate from D-erythrose 4-phosphate and phosphoenolpyruvate: step 4/7. Its function is as follows. Involved in the biosynthesis of the chorismate, which leads to the biosynthesis of aromatic amino acids. Catalyzes the reversible NADPH linked reduction of 3-dehydroshikimate (DHSA) to yield shikimate (SA). The protein is Shikimate dehydrogenase (NADP(+)) of Acidiphilium cryptum (strain JF-5).